The chain runs to 444 residues: Na(+)-translocating NADH-quinone reductase subunit A (444 aa).

The protein belongs to the NqrA family. Composed of six subunits; NqrA, NqrB, NqrC, NqrD, NqrE and NqrF.

The enzyme catalyses a ubiquinone + n Na(+)(in) + NADH + H(+) = a ubiquinol + n Na(+)(out) + NAD(+). NQR complex catalyzes the reduction of ubiquinone-1 to ubiquinol by two successive reactions, coupled with the transport of Na(+) ions from the cytoplasm to the periplasm. NqrA to NqrE are probably involved in the second step, the conversion of ubisemiquinone to ubiquinol. The sequence is that of Na(+)-translocating NADH-quinone reductase subunit A from Shewanella denitrificans (strain OS217 / ATCC BAA-1090 / DSM 15013).